The sequence spans 432 residues: MKNNYKSLVIVGSQWGDEGKGKITDYFSQKADVVVRFAGGDNAGHMIEFNNKRHKVTIIPSGVFNPKVKNIIGNGTVINLKSLVNEIKRLNESNISTDNVFVSDRAHLIFDWHALIDQLQEENRKENKIGTTKRGIGPTYADKAARYGIRICDFQNPNFKEILKENLDYHNQIITKVYNHEPLDFDVIYNESMTNYQFIKNNIIDSGYEVSNLINENKFVLFEGAQGVLLDIDHGTYPFVTSSNCSANNASIGTGIHNKQINKVLGIVKAYNTRVGSGAMVSEIKTELAHKLRERGREYGLNTGRPRRIGWLDLVALKYAIRVGGIDQLFLTLFDVLDTETKIKICTHYKLDGKIIDWFPASDYELKRCEPVYEELDGWNQDITKVTSFEELPINAQKYIKRIEEIVKVPFLGFSVGSDRKQTILIKGEFDD.

Residues 16-22 and 44-46 contribute to the GTP site; these read GDEGKGK and GHM. The Proton acceptor role is filled by Asp17. Mg(2+)-binding residues include Asp17 and Gly44. IMP is bound by residues 17-20, 42-45, Thr132, Arg146, Gln226, Thr241, and Arg305; these read DEGK and NAGH. His45 functions as the Proton donor in the catalytic mechanism. 301–307 provides a ligand contact to substrate; the sequence is LNTGRPR. GTP contacts are provided by residues Arg307, 333-335, and 415-417; these read LFD and SVG.

The protein belongs to the adenylosuccinate synthetase family. As to quaternary structure, homodimer. Requires Mg(2+) as cofactor.

It localises to the cytoplasm. It catalyses the reaction IMP + L-aspartate + GTP = N(6)-(1,2-dicarboxyethyl)-AMP + GDP + phosphate + 2 H(+). Its pathway is purine metabolism; AMP biosynthesis via de novo pathway; AMP from IMP: step 1/2. In terms of biological role, plays an important role in the de novo pathway of purine nucleotide biosynthesis. Catalyzes the first committed step in the biosynthesis of AMP from IMP. This Mycoplasma mycoides subsp. mycoides SC (strain CCUG 32753 / NCTC 10114 / PG1) protein is Adenylosuccinate synthetase.